The following is a 72-amino-acid chain: Conotoxin VnMKLT2-0221 (72 aa).

The signal sequence occupies residues Met1 to Ala22. A propeptide spanning residues Ala23 to Thr45 is cleaved from the precursor. Residues Ala26–Thr45 are disordered. Intrachain disulfides connect Cys48–Cys62, Cys55–Cys66, and Cys61–Cys71.

This sequence belongs to the conotoxin O1 superfamily. Expressed by the venom duct.

The protein localises to the secreted. This Conus ventricosus (Mediterranean cone) protein is Conotoxin VnMKLT2-0221.